The sequence spans 547 residues: Chaperonin GroEL (547 aa).

ATP is bound by residues 30–33 (TLGP), lysine 51, 87–91 (DGTTT), glycine 415, and aspartate 496. Residues 528–547 (KEGAAPAGGMPDMGGMGGMM) form a disordered region. The span at 538 to 547 (PDMGGMGGMM) shows a compositional bias: gly residues.

The protein belongs to the chaperonin (HSP60) family. As to quaternary structure, forms a cylinder of 14 subunits composed of two heptameric rings stacked back-to-back. Interacts with the co-chaperonin GroES.

It localises to the cytoplasm. It carries out the reaction ATP + H2O + a folded polypeptide = ADP + phosphate + an unfolded polypeptide.. Its function is as follows. Together with its co-chaperonin GroES, plays an essential role in assisting protein folding. The GroEL-GroES system forms a nano-cage that allows encapsulation of the non-native substrate proteins and provides a physical environment optimized to promote and accelerate protein folding. This Ruegeria sp. (strain TM1040) (Silicibacter sp.) protein is Chaperonin GroEL.